A 506-amino-acid chain; its full sequence is MAEKPKKPQKLKARLPRGLEDRDPAAIRATREMVEKIRAVYELYGFEPVETPAMEYTDALGKFLPDQDRPNEGVFSFQDDDEQWISLRYDLTAPLARYVGERYGTDGLVLPYRSYRVGYVFRNEKPGPGRFRQFMQFDADTVGSATPAADAEICMMAADTMEALGVQRGQYVVKVNNRKVLDGVLEAIGLAGDENAARRLTVLRAIDKLDKFPADEVRKLLGPGRWDGGEEGKGDFTKGANLSAAEADVVLAITKPRDDWKEAIAAAEAYLAKSEVGQAGVSELEEIAKLVMASGYGADRIKIDPSVVRGLEYYTGPVYEVELLLDTKDEKGRPVRFGSVGGGGRYDGLVSRFRGEPVPATGFSIGVSRLQAALTLLGKLDTRPEFGPVVVTVFDRDRVADYQKMVASLRTAGIRAELYLGNPKNMGNQLKYADRRNSPCVIIQGSDEKARGELQIKDLIEGAKAAAAIASNQEWRESRPAQFSCAEADLVAKVREVLARHDVSWG.

This sequence belongs to the class-II aminoacyl-tRNA synthetase family. As to quaternary structure, homodimer.

It is found in the cytoplasm. The enzyme catalyses tRNA(His) + L-histidine + ATP = L-histidyl-tRNA(His) + AMP + diphosphate + H(+). This Bradyrhizobium diazoefficiens (strain JCM 10833 / BCRC 13528 / IAM 13628 / NBRC 14792 / USDA 110) protein is Histidine--tRNA ligase (hisS).